A 770-amino-acid polypeptide reads, in one-letter code: uncharacterized protein (770 aa).

Residues 736–770 (GSGQPGQSPANVGDDPNRMVQSSASQTQIGHVFNN) are disordered. The segment covering 754 to 770 (MVQSSASQTQIGHVFNN) has biased composition (polar residues).

This is an uncharacterized protein from Caenorhabditis elegans.